A 500-amino-acid chain; its full sequence is Cytochrome P450 11B1, mitochondrial (500 aa).

Residues 1–24 (MAFRLKSDVRLAGSWLCLRGARAL) constitute a mitochondrion transit peptide. Heme is bound at residue Cys-447.

The protein belongs to the cytochrome P450 family. Heme serves as cofactor.

It is found in the mitochondrion inner membrane. The catalysed reaction is a steroid + 2 reduced [adrenodoxin] + O2 + 2 H(+) = an 11beta-hydroxysteroid + 2 oxidized [adrenodoxin] + H2O. The enzyme catalyses 11-deoxycortisol + 2 reduced [adrenodoxin] + O2 + 2 H(+) = cortisol + 2 oxidized [adrenodoxin] + H2O. It carries out the reaction 21-hydroxyprogesterone + 2 reduced [adrenodoxin] + O2 + 2 H(+) = corticosterone + 2 oxidized [adrenodoxin] + H2O. It catalyses the reaction 21-hydroxyprogesterone + 2 reduced [adrenodoxin] + O2 + 2 H(+) = 18-hydroxy-11-deoxycorticosterone + 2 oxidized [adrenodoxin] + H2O. The catalysed reaction is 21-hydroxyprogesterone + 2 reduced [adrenodoxin] + O2 + 2 H(+) = 19-hydroxy-11-deoxycorticosterone + 2 oxidized [adrenodoxin] + H2O. The enzyme catalyses cortisol + 2 reduced [adrenodoxin] + O2 + 2 H(+) = 18-hydroxycortisol + 2 oxidized [adrenodoxin] + H2O. It carries out the reaction 11-deoxycortisol + 2 reduced [adrenodoxin] + O2 + 2 H(+) = 18-hydroxy-11-deoxycortisol + 2 oxidized [adrenodoxin] + H2O. It participates in steroid biosynthesis; glucocorticoid biosynthesis. It functions in the pathway steroid hormone biosynthesis. In terms of biological role, a cytochrome P450 monooxygenase involved in the biosynthesis of adrenal corticoids. Catalyzes a variety of reactions that are essential for many species, including detoxification, defense, and the formation of endogenous chemicals like steroid hormones. Steroid 11beta, 18- and 19-hydroxylase with preferred regioselectivity at 11beta, then 18, and lastly 19. Catalyzes the hydroxylation of 11-deoxycortisol and 11-deoxycorticosterone (21-hydroxyprogesterone) at 11beta position, yielding cortisol or corticosterone, respectively, but cannot produce aldosterone. Mechanistically, uses molecular oxygen inserting one oxygen atom into a substrate for hydroxylation and reducing the second into a water molecule. Two electrons are provided by NADPH via a two-protein mitochondrial transfer system comprising flavoprotein FDXR (adrenodoxin/ferredoxin reductase) and nonheme iron-sulfur protein FDX1 or FDX2 (adrenodoxin/ferredoxin). Due to its lack of 18-oxidation activity, it is incapable of generating aldosterone. Could also be involved in the androgen metabolic pathway. This chain is Cytochrome P450 11B1, mitochondrial (CYP11B1), found in Cavia porcellus (Guinea pig).